The primary structure comprises 60 residues: Large ribosomal subunit protein uL30 (60 aa).

Belongs to the universal ribosomal protein uL30 family. In terms of assembly, part of the 50S ribosomal subunit.

In Lachnoclostridium phytofermentans (strain ATCC 700394 / DSM 18823 / ISDg) (Clostridium phytofermentans), this protein is Large ribosomal subunit protein uL30.